We begin with the raw amino-acid sequence, 1897 residues long: 1,3-beta-glucan synthase component FKS1 (1897 aa).

The disordered stretch occupies residues 1 to 106; that stretch reads MSGYPAGHYE…SETFSDFTMR (106 aa). Positions 8–29 are enriched in basic and acidic residues; that stretch reads HYEDGYGHQEHGGDAYYQDEHG. Low complexity predominate over residues 74–83; the sequence is GDQYYDQGNG. 17 helical membrane passes run 487–507, 525–545, 564–584, 591–611, 655–675, 707–727, 728–748, 1329–1349, 1386–1406, 1473–1493, 1497–1517, 1588–1608, 1630–1650, 1666–1686, 1701–1721, 1766–1786, and 1826–1846; these read IWVI…PTLY, WSAV…ATLC, LMFL…VFGF, TICL…FFFF, LWIC…TLSL, ILLG…SYLW, YVIC…VSIW, NMFI…LGAL, CVVS…VQEL, FAGP…FATS, TPAL…PFLF, IFFS…VPYL, IAIV…MFFG, FGAV…LVIF, VLGM…IISL, FSAD…ALCI, and FAIL…APLV.

The protein belongs to the glycosyltransferase 48 family. Component of the 1,3-beta-glucan synthase (GS) complex composed of a catalytic subunit fksA and a regulatory subunit.

Its subcellular location is the mitochondrion. It localises to the cell membrane. The catalysed reaction is [(1-&gt;3)-beta-D-glucosyl](n) + UDP-alpha-D-glucose = [(1-&gt;3)-beta-D-glucosyl](n+1) + UDP + H(+). Functionally, catalytic subunit of the 1,3-beta-glucan synthase. Synthesizes 1,3-beta-glucan, a major structural component of the fungal cell wall. Involved in cell wall synthesis, maintenance and remodeling. In Aspergillus niger (strain ATCC MYA-4892 / CBS 513.88 / FGSC A1513), this protein is 1,3-beta-glucan synthase component FKS1.